We begin with the raw amino-acid sequence, 385 residues long: MNIHEYQAKEILRKYGVPTSTGVVVTKTESINAAIDELNTKVYVVKAQIHAGGRGKAGGVKVVKSKEEAKKVAHDMFGINLVTHQTGPQGQKVNRLYIESGCDILKEYYFSVVFDRSASCITFIASTEGGVDIEEVAEKTPEKIIKFSVDPATGLQNFHAQGIAYELGFKDHQVKQMKEIVKATYKAFIETDAAQIEINPLIVNKEGNLLALDAKFTFDDNGLFKHPEIMALRDQDEEDPLETRAADAGLSYVKMDGSIGCMVNGAGLAMATMDIIKLYGATPANFLDVGGGADRERVKEALKIILSDKEVKGILVNIFGGIMRCDIIAEGIIAAAKDIGIKVPLVVRLAGTNVEKGKEILSNSGLEIIPAHDLADAASKIVEAI.

The ATP-grasp domain maps to 9-244; sequence KEILRKYGVP…QDEEDPLETR (236 aa). ATP is bound by residues Lys46, 53–55, Glu99, Cys102, and Glu107; that span reads GRG. 2 residues coordinate Mg(2+): Asn199 and Asp213. Residues Asn264 and 321–323 each bind substrate; that span reads GIM.

It belongs to the succinate/malate CoA ligase beta subunit family. In terms of assembly, heterotetramer of two alpha and two beta subunits. It depends on Mg(2+) as a cofactor.

It catalyses the reaction succinate + ATP + CoA = succinyl-CoA + ADP + phosphate. The catalysed reaction is GTP + succinate + CoA = succinyl-CoA + GDP + phosphate. The protein operates within carbohydrate metabolism; tricarboxylic acid cycle; succinate from succinyl-CoA (ligase route): step 1/1. In terms of biological role, succinyl-CoA synthetase functions in the citric acid cycle (TCA), coupling the hydrolysis of succinyl-CoA to the synthesis of either ATP or GTP and thus represents the only step of substrate-level phosphorylation in the TCA. The beta subunit provides nucleotide specificity of the enzyme and binds the substrate succinate, while the binding sites for coenzyme A and phosphate are found in the alpha subunit. This is Succinate--CoA ligase [ADP-forming] subunit beta from Rickettsia bellii (strain RML369-C).